Here is a 228-residue protein sequence, read N- to C-terminus: CD9 antigen (228 aa).

Residues 2–12 (PVKGGTKCIKY) lie on the Cytoplasmic side of the membrane. C9 is lipidated: S-palmitoyl cysteine. The helical transmembrane segment at 13-33 (LLFGFNFIFWLAGIAVLAIGL) threads the bilayer. The Extracellular segment spans residues 34-55 (WLRFDSQTKSIFEQETNNNNSS). N52 and N53 each carry an N-linked (GlcNAc...) asparagine glycan. A helical membrane pass occupies residues 56–76 (FYTGVYILIGAGALMMLVGFL). The Cytoplasmic segment spans residues 77 to 87 (GCCGAVQESQC). 3 S-palmitoyl cysteine lipidation sites follow: C78, C79, and C87. A helical membrane pass occupies residues 88 to 111 (MLGLFFGFLLVIFAIEIAAAIWGY). The Extracellular portion of the chain corresponds to 112 to 195 (SHKDEVIKEV…KEVFDNKFHI (84 aa)). 2 cysteine pairs are disulfide-bonded: C152-C181 and C153-C167. A helical transmembrane segment spans residues 196–221 (IGAVGIGIAVVMIFGMIFSMILCCAI). S-palmitoyl cysteine attachment occurs at residues C218 and C219. Residues 222–228 (RRNREMV) are Cytoplasmic-facing.

It belongs to the tetraspanin (TM4SF) family. In terms of assembly, forms both disulfide-linked homodimers and higher homooligomers as well as heterooligomers with other members of the tetraspanin family. Interacts (via the second extracellular domain) with integrin ITGAV:ITGB3. Interacts with integrin ITGA6:ITGB1; interaction takes place in oocytes and is involved in sperm-egg fusion. Part of integrin-tetraspanin complexes composed of CD81, beta-1 and beta-2 integrins in the membrane of monocyte/macrophages. Interacts with CD63; identified in a complex with CD63 and ITGB3. Associates with CR2/CD21 and with PTGFRN/CD9P1. Part of a complex composed of CD9, CD81, PTGFRN and IGSF8. Interacts directly with IGSF8. Interacts with PDPN; this interaction is homophilic and attenuates platelet aggregation and pulmonary metastasis induced by PDPN. Interacts (on T cell side) with CD81 at immunological synapses between antigen-presenting cells and T cells. In terms of processing, palmitoylated at a low, basal level in unstimulated platelets. The level of palmitoylation increases when platelets are activated by thrombin (in vitro). The protein exists in three forms with molecular masses between 22 and 27 kDa, and is known to carry covalently linked fatty acids. Palmitoylation by ZDHHC2 regulates CD9 expression, association with other tetraspanin family proteins and function in cell adhesion. As to expression, detected in platelets (at protein level). Expressed by a variety of hematopoietic and epithelial cells.

Its subcellular location is the cell membrane. The protein resides in the membrane. It is found in the secreted. It localises to the extracellular exosome. Integral membrane protein associated with integrins, which regulates different processes, such as sperm-egg fusion, platelet activation and aggregation, and cell adhesion. Present at the cell surface of oocytes and plays a key role in sperm-egg fusion, possibly by organizing multiprotein complexes and the morphology of the membrane required for the fusion. In myoblasts, associates with CD81 and PTGFRN and inhibits myotube fusion during muscle regeneration. In macrophages, associates with CD81 and beta-1 and beta-2 integrins, and prevents macrophage fusion into multinucleated giant cells specialized in ingesting complement-opsonized large particles. Also prevents the fusion between mononuclear cell progenitors into osteoclasts in charge of bone resorption. Acts as a receptor for PSG17. Involved in platelet activation and aggregation. Regulates paranodal junction formation. Involved in cell adhesion, cell motility and tumor metastasis. This is CD9 antigen from Homo sapiens (Human).